We begin with the raw amino-acid sequence, 449 residues long: Interferon-related developmental regulator 1 (449 aa).

The span at 1 to 10 shows a compositional bias: basic residues; it reads MPKNKKRNAP. A disordered region spans residues 1–42; that stretch reads MPKNKKRNAPHRGGGGGGGSGAATSAATAGGPHRTVQPFSDE. Over residues 12–21 the composition is skewed to gly residues; sequence RGGGGGGGSG. Residues 22–31 are compositionally biased toward low complexity; it reads AATSAATAGG.

It belongs to the IFRD family. Interacts with PSIP1/LEDGF.

Could play a role in regulating gene activity in the proliferative and/or differentiative pathways induced by NGF. May be an autocrine factor that attenuates or amplifies the initial ligand-induced signal. The protein is Interferon-related developmental regulator 1 (Ifrd1) of Mus musculus (Mouse).